Reading from the N-terminus, the 70-residue chain is Conotoxin Ep11.12 (70 aa).

The first 26 residues, 1-26, serve as a signal peptide directing secretion; that stretch reads MMFRVTSVGCFLLVILSLNLVVLTNA. 4 cysteine pairs are disulfide-bonded: C27–C41, C34–C46, C40–C50, and C45–C54. P57 carries the proline amide modification. The propeptide occupies 61–70; sequence AKLREFFRQR.

Belongs to the conotoxin I2 superfamily. Expressed by the venom duct.

It localises to the secreted. The protein is Conotoxin Ep11.12 of Conus episcopatus (Bishop's cone).